Reading from the N-terminus, the 468-residue chain is uncharacterized protein (468 aa).

Coiled coils occupy residues 10–94 and 147–279; these read NEAL…VKEL and FVEL…EASI. The disordered stretch occupies residues 324-369; it reads TPRTVDPIPEGTIIKKESSDDAMFSGLKKSKPKKSNKSNNNQADSD. Ser-342 bears the Phosphoserine mark. The stretch at 399–445 forms a coiled coil; sequence VEQLKSRIAHFKEQQDSVTKQRIEKAKQEIEKLEAKYNSKEEKTLTE.

The protein localises to the cytoplasm. This is an uncharacterized protein from Schizosaccharomyces pombe (strain 972 / ATCC 24843) (Fission yeast).